A 272-amino-acid chain; its full sequence is FAS1 domain-containing protein YDR262W (272 aa).

The N-terminal stretch at 1–26 is a signal peptide; sequence MIFNLPVSVLLYFSLIWAMEPSFVRG. An FAS1 domain is found at 100 to 269; sequence PLSLESKLSL…GVILMVDFTL (170 aa).

It is found in the vacuole. This chain is FAS1 domain-containing protein YDR262W, found in Saccharomyces cerevisiae (strain ATCC 204508 / S288c) (Baker's yeast).